Here is a 289-residue protein sequence, read N- to C-terminus: tRNA U34 carboxymethyltransferase (289 aa).

Residues Lys60, Trp74, Lys79, Gly98, 120-122 (DPS), 147-148 (VE), Tyr167, and Arg282 each bind carboxy-S-adenosyl-L-methionine.

This sequence belongs to the class I-like SAM-binding methyltransferase superfamily. CmoB family. In terms of assembly, homotetramer.

The enzyme catalyses carboxy-S-adenosyl-L-methionine + 5-hydroxyuridine(34) in tRNA = 5-carboxymethoxyuridine(34) in tRNA + S-adenosyl-L-homocysteine + H(+). Its function is as follows. Catalyzes carboxymethyl transfer from carboxy-S-adenosyl-L-methionine (Cx-SAM) to 5-hydroxyuridine (ho5U) to form 5-carboxymethoxyuridine (cmo5U) at position 34 in tRNAs. The sequence is that of tRNA U34 carboxymethyltransferase from Campylobacter concisus (strain 13826).